A 261-amino-acid polypeptide reads, in one-letter code: Uridine-cytidine kinase 2-B (261 aa).

29–37 provides a ligand contact to ATP; that stretch reads GGTASGKSS. 6 residues coordinate substrate: aspartate 86, tyrosine 114, histidine 119, arginine 168, arginine 178, and glutamine 186. Aspartate 215 is an ATP binding site. The disordered stretch occupies residues 238 to 261; that stretch reads RQNGFQNGHGTPRQRRTSESSRPH.

It belongs to the uridine kinase family. As to quaternary structure, homotetramer.

It catalyses the reaction uridine + ATP = UMP + ADP + H(+). It carries out the reaction cytidine + ATP = CMP + ADP + H(+). It participates in pyrimidine metabolism; CTP biosynthesis via salvage pathway; CTP from cytidine: step 1/3. It functions in the pathway pyrimidine metabolism; UMP biosynthesis via salvage pathway; UMP from uridine: step 1/1. Phosphorylates uridine and cytidine to uridine monophosphate and cytidine monophosphate. Does not phosphorylate deoxyribonucleosides or purine ribonucleosides. Can use ATP or GTP as a phosphate donor. This chain is Uridine-cytidine kinase 2-B (uck2b), found in Danio rerio (Zebrafish).